Consider the following 582-residue polypeptide: Putative G-protein coupled receptor B0244.10 (582 aa).

Helical transmembrane passes span 25 to 45 (LYII…PLGL), 70 to 90 (ITFS…GFAV), 120 to 140 (WTFF…GLVI), and 159 to 179 (LLVQ…VFLT). N-linked (GlcNAc...) asparagine glycosylation occurs at Asn190. A helical transmembrane segment spans residues 199–218 (LTLGKWFIALYRFLFQMTNI). Residues Asn221 and Asn237 are each glycosylated (N-linked (GlcNAc...) asparagine). 5 helical membrane-spanning segments follow: residues 253–273 (SLMI…AVLV), 296–316 (YIFV…IIII), 329–349 (TFAF…SLLG), 377–397 (IYII…PFGL), and 421–441 (WLLF…LLFV). Asn457 carries an N-linked (GlcNAc...) asparagine glycan. 2 helical membrane passes run 475-495 (TILV…AAFG) and 513-533 (LIFP…TFLL). An N-linked (GlcNAc...) asparagine glycan is attached at Asn538.

The protein belongs to the G-protein coupled receptor 1 family. B0244 subfamily.

It localises to the cell membrane. The chain is Putative G-protein coupled receptor B0244.10 from Caenorhabditis elegans.